The primary structure comprises 785 residues: Ubiquitin carboxyl-terminal hydrolase 10 (785 aa).

Composition is skewed to polar residues over residues 113 to 122 and 262 to 277; these read LTLDSGSNAE and DTTE…TLES. 2 disordered regions span residues 113 to 145 and 262 to 314; these read LTLD…PPGY and DTTE…ATAT. The segment covering 290–304 has biased composition (basic and acidic residues); it reads HTVESTDSDQAKPEE. Over residues 305–314 the composition is skewed to low complexity; it reads ASPTTEATAT. One can recognise a USP domain in the interval 401–782; the sequence is RGLINKGNWC…TAYLLYYRRV (382 aa). Cysteine 410 functions as the Nucleophile in the catalytic mechanism. The interval 537-581 is disordered; that stretch reads EKLSVSNGPEVQTVREEEEQDEQGEGSEDEWEQVGPRNKSSVTRQ. A compositionally biased stretch (acidic residues) spans 552–568; that stretch reads EEEEQDEQGEGSEDEWE. Residue histidine 736 is the Proton acceptor of the active site.

Belongs to the peptidase C19 family. USP10 subfamily.

The protein localises to the cytoplasm. It is found in the nucleus. The enzyme catalyses Thiol-dependent hydrolysis of ester, thioester, amide, peptide and isopeptide bonds formed by the C-terminal Gly of ubiquitin (a 76-residue protein attached to proteins as an intracellular targeting signal).. Functionally, hydrolase that can remove conjugated ubiquitin from target proteins such as p53/TP53, RPS2/us5, RPS3/us3, RPS10/eS10, BECN1, SNX3 and CFTR. Acts as an essential regulator of p53/TP53 stability: in unstressed cells, specifically deubiquitinates p53/TP53 in the cytoplasm, leading to counteracts MDM2 action and stabilize p53/TP53. Following DNA damage, translocates to the nucleus and deubiquitinates p53/TP53, leading to regulate the p53/TP53-dependent DNA damage response. Component of a regulatory loop that controls autophagy and p53/TP53 levels. Plays a key role in 40S ribosome subunit recycling when a ribosome has stalled during translation: acts both by inhibiting formation of stress granules, which store stalled translation pre-initiation complexes, and mediating deubiquitination of 40S ribosome subunits. Deubiquitinates CFTR in early endosomes, enhancing its endocytic recycling. This Gallus gallus (Chicken) protein is Ubiquitin carboxyl-terminal hydrolase 10 (USP10).